We begin with the raw amino-acid sequence, 392 residues long: DNA primase small subunit PriS (392 aa).

Active-site residues include aspartate 98, aspartate 100, and aspartate 295.

The protein belongs to the eukaryotic-type primase small subunit family. In terms of assembly, heterodimer of a small subunit (PriS) and a large subunit (PriL). Requires Mg(2+) as cofactor. Mn(2+) is required as a cofactor.

Its function is as follows. Catalytic subunit of DNA primase, an RNA polymerase that catalyzes the synthesis of short RNA molecules used as primers for DNA polymerase during DNA replication. The small subunit contains the primase catalytic core and has DNA synthesis activity on its own. Binding to the large subunit stabilizes and modulates the activity, increasing the rate of DNA synthesis while decreasing the length of the DNA fragments, and conferring RNA synthesis capability. The DNA polymerase activity may enable DNA primase to also catalyze primer extension after primer synthesis. May also play a role in DNA repair. In Haloarcula marismortui (strain ATCC 43049 / DSM 3752 / JCM 8966 / VKM B-1809) (Halobacterium marismortui), this protein is DNA primase small subunit PriS.